A 182-amino-acid chain; its full sequence is Crossover junction endodeoxyribonuclease RuvC (182 aa).

Catalysis depends on residues D7, E67, and D139. D7, E67, and D139 together coordinate Mg(2+).

Belongs to the RuvC family. In terms of assembly, homodimer which binds Holliday junction (HJ) DNA. The HJ becomes 2-fold symmetrical on binding to RuvC with unstacked arms; it has a different conformation from HJ DNA in complex with RuvA. In the full resolvosome a probable DNA-RuvA(4)-RuvB(12)-RuvC(2) complex forms which resolves the HJ. Mg(2+) is required as a cofactor.

It is found in the cytoplasm. It carries out the reaction Endonucleolytic cleavage at a junction such as a reciprocal single-stranded crossover between two homologous DNA duplexes (Holliday junction).. In terms of biological role, the RuvA-RuvB-RuvC complex processes Holliday junction (HJ) DNA during genetic recombination and DNA repair. Endonuclease that resolves HJ intermediates. Cleaves cruciform DNA by making single-stranded nicks across the HJ at symmetrical positions within the homologous arms, yielding a 5'-phosphate and a 3'-hydroxyl group; requires a central core of homology in the junction. The consensus cleavage sequence is 5'-(A/T)TT(C/G)-3'. Cleavage occurs on the 3'-side of the TT dinucleotide at the point of strand exchange. HJ branch migration catalyzed by RuvA-RuvB allows RuvC to scan DNA until it finds its consensus sequence, where it cleaves and resolves the cruciform DNA. This chain is Crossover junction endodeoxyribonuclease RuvC, found in Bordetella petrii (strain ATCC BAA-461 / DSM 12804 / CCUG 43448).